Here is a 160-residue protein sequence, read N- to C-terminus: Eosinophil cationic protein (160 aa).

The signal sequence occupies residues 1–27 (MVPKLFTSQICLLLLLGLMGVEGSLHA). The tract at residues 28-72 (RPPQFTRAQWFAIQHISLNPPRCTIAMRAINNYRWRCKNQNTFLR) is required for nearly all of the bactericidal activity; partially involved in LPS-binding and bacterial membrane depolarization. His42 acts as the Proton acceptor in catalysis. 4 disulfides stabilise this stretch: Cys50–Cys110, Cys64–Cys123, Cys82–Cys138, and Cys89–Cys98. Tyr60 carries the post-translational modification 3'-nitrotyrosine. Residue 65-69 (KNQNT) coordinates substrate. N-linked (GlcNAc...) asparagine glycosylation is found at Asn84, Asn92, and Asn119. His155 serves as the catalytic Proton donor.

It belongs to the pancreatic ribonuclease family. As to quaternary structure, interacts with bacterial lipopolysaccharide (LPS) and lipoteichoic acid (LTA). In vitro interacts with and insert into lipid bilayers composed of dioleoyl phosphatidylcholine and dioleoyl phosphatidylglycerol. In vitro, tends to form amyloid-like aggregates at pH 3, but not at pH 5, nor 7.

Its subcellular location is the secreted. Functionally, cytotoxin and helminthotoxin with low-efficiency ribonuclease activity. Possesses a wide variety of biological activities. Exhibits antibacterial activity, including cytoplasmic membrane depolarization of preferentially Gram-negative, but also Gram-positive strains. Promotes E.coli outer membrane detachment, alteration of the overall cell shape and partial loss of cell content. This Homo sapiens (Human) protein is Eosinophil cationic protein (RNASE3).